The primary structure comprises 318 residues: Acetyl-coenzyme A carboxylase carboxyl transferase subunit alpha (318 aa).

The region spanning 39–293 is the CoA carboxyltransferase C-terminal domain; sequence KLEKKVDKMR…HEALARHLKE (255 aa).

The protein belongs to the AccA family. As to quaternary structure, acetyl-CoA carboxylase is a heterohexamer composed of biotin carboxyl carrier protein (AccB), biotin carboxylase (AccC) and two subunits each of ACCase subunit alpha (AccA) and ACCase subunit beta (AccD).

It localises to the cytoplasm. It catalyses the reaction N(6)-carboxybiotinyl-L-lysyl-[protein] + acetyl-CoA = N(6)-biotinyl-L-lysyl-[protein] + malonyl-CoA. Its pathway is lipid metabolism; malonyl-CoA biosynthesis; malonyl-CoA from acetyl-CoA: step 1/1. Component of the acetyl coenzyme A carboxylase (ACC) complex. First, biotin carboxylase catalyzes the carboxylation of biotin on its carrier protein (BCCP) and then the CO(2) group is transferred by the carboxyltransferase to acetyl-CoA to form malonyl-CoA. In Geobacter metallireducens (strain ATCC 53774 / DSM 7210 / GS-15), this protein is Acetyl-coenzyme A carboxylase carboxyl transferase subunit alpha.